Consider the following 162-residue polypeptide: Protein NrdI (162 aa).

Belongs to the NrdI family.

Probably involved in ribonucleotide reductase function. The sequence is that of Protein NrdI from Streptococcus pyogenes serotype M3 (strain ATCC BAA-595 / MGAS315).